Reading from the N-terminus, the 132-residue chain is Fluoride-specific ion channel FluC (132 aa).

Helical transmembrane passes span 5–25 (LYIALGGALGSVGRFALSGLV), 32–52 (TFPWGTLVVNVVGSFIIGFFA), 70–90 (FVMTGVLGGFTTFSSFSLQTL), and 105–125 (VVGSLVLCLVAVWLGHIAAVG). Residues glycine 77 and threonine 80 each coordinate Na(+).

It belongs to the fluoride channel Fluc/FEX (TC 1.A.43) family.

The protein localises to the cell inner membrane. It catalyses the reaction fluoride(in) = fluoride(out). Its activity is regulated as follows. Na(+) is not transported, but it plays an essential structural role and its presence is essential for fluoride channel function. Functionally, fluoride-specific ion channel. Important for reducing fluoride concentration in the cell, thus reducing its toxicity. This is Fluoride-specific ion channel FluC from Opitutus terrae (strain DSM 11246 / JCM 15787 / PB90-1).